We begin with the raw amino-acid sequence, 242 residues long: Type III pantothenate kinase (242 aa).

ATP is bound at residue 6-13; sequence DAGNTRLK. Substrate-binding positions include Y90 and 97 to 100; that span reads GADR. Catalysis depends on D99, which acts as the Proton acceptor. D119 provides a ligand contact to K(+). An ATP-binding site is contributed by S122. T174 is a binding site for substrate.

Belongs to the type III pantothenate kinase family. As to quaternary structure, homodimer. NH4(+) serves as cofactor. It depends on K(+) as a cofactor.

The protein resides in the cytoplasm. The catalysed reaction is (R)-pantothenate + ATP = (R)-4'-phosphopantothenate + ADP + H(+). It participates in cofactor biosynthesis; coenzyme A biosynthesis; CoA from (R)-pantothenate: step 1/5. Its function is as follows. Catalyzes the phosphorylation of pantothenate (Pan), the first step in CoA biosynthesis. This is Type III pantothenate kinase from Marinobacter nauticus (strain ATCC 700491 / DSM 11845 / VT8) (Marinobacter aquaeolei).